We begin with the raw amino-acid sequence, 178 residues long: Large ribosomal subunit protein uL10 (178 aa).

It belongs to the universal ribosomal protein uL10 family. In terms of assembly, part of the ribosomal stalk of the 50S ribosomal subunit. The N-terminus interacts with L11 and the large rRNA to form the base of the stalk. The C-terminus forms an elongated spine to which L12 dimers bind in a sequential fashion forming a multimeric L10(L12)X complex.

Functionally, forms part of the ribosomal stalk, playing a central role in the interaction of the ribosome with GTP-bound translation factors. The polypeptide is Large ribosomal subunit protein uL10 (Albidiferax ferrireducens (strain ATCC BAA-621 / DSM 15236 / T118) (Rhodoferax ferrireducens)).